The following is a 306-amino-acid chain: Polyphosphate kinase PPK2B (306 aa).

This sequence belongs to the polyphosphate kinase 2 (PPK2) family. Class I subfamily. As to quaternary structure, homotetramer. It depends on Mn(2+) as a cofactor.

It carries out the reaction [phosphate](n) + ATP = [phosphate](n+1) + ADP. The enzyme catalyses [phosphate](n) + GTP = [phosphate](n+1) + GDP. In terms of biological role, catalyzes the synthesis of polyP from ATP or GTP. Can also use inorganic polyphosphate (polyP) as a donor to convert ADP to ATP, but the activity is 10-fold higher in vitro for polyP synthesis than for ATP formation. The chain is Polyphosphate kinase PPK2B from Corynebacterium glutamicum (strain ATCC 13032 / DSM 20300 / JCM 1318 / BCRC 11384 / CCUG 27702 / LMG 3730 / NBRC 12168 / NCIMB 10025 / NRRL B-2784 / 534).